The following is a 599-amino-acid chain: Sodium-dependent phosphate transport protein 2C (599 aa).

At Met-1–Ala-76 the chain is on the cytoplasmic side. A Phosphoserine modification is found at Ser-4. The chain crosses the membrane as a helical span at residues Cys-77–Phe-97. Topologically, residues Gln-98–Asp-111 are extracellular. Residues Asn-112–Val-132 traverse the membrane as a helical segment. Residues Gln-133 to Ala-188 are Cytoplasmic-facing. A helical membrane pass occupies residues Phe-189–Leu-209. Residues Glu-210 to Ala-322 lie on the Extracellular side of the membrane. Residues Asn-265, Asn-268, Asn-286, and Asn-299 are each glycosylated (N-linked (GlcNAc...) asparagine). A disulfide bridge connects residues Cys-276 and Cys-309. The helical transmembrane segment at Val-323–Val-343 threads the bilayer. At Lys-344 to Pro-367 the chain is on the cytoplasmic side. Residues Phe-368–Ala-388 traverse the membrane as a helical segment. Over Leu-389–Gln-445 the chain is Extracellular. Residues Val-446–Ala-466 form a helical membrane-spanning segment. The Cytoplasmic segment spans residues Leu-467–Arg-485. A helical transmembrane segment spans residues Trp-486–Leu-506. The Extracellular segment spans residues Ser-507–Gly-510. A helical membrane pass occupies residues Gly-511–Val-531. Topologically, residues Thr-532–Leu-599 are cytoplasmic.

It belongs to the SLC34A transporter family. Expressed only in the kidney.

It localises to the apical cell membrane. The enzyme catalyses 2 Na(+)(out) + phosphate(out) = 2 Na(+)(in) + phosphate(in). Involved in actively transporting phosphate into cells via Na(+) cotransport in the renal brush border membrane. The cotransport has a Na(+):Pi stoichiometry of 2:1 and is electroneutral. In Homo sapiens (Human), this protein is Sodium-dependent phosphate transport protein 2C (SLC34A3).